Reading from the N-terminus, the 780-residue chain is Protein AMEIOTIC 1 (780 aa).

2 disordered regions span residues 32 to 60 (KKKT…SPLS) and 237 to 327 (APKE…RWSA). The span at 50-60 (DSTIQPRSPLS) shows a compositional bias: polar residues. Basic and acidic residues-rich tracts occupy residues 263–291 (EVKR…EGKK) and 309–327 (RTVE…RWSA). Residues 448-547 (VEELTEEVNG…LEEQVTYLSS (100 aa)) adopt a coiled-coil conformation.

The protein localises to the nucleus. The protein resides in the chromosome. Plays a fundamental role in building the proper chromosome structure at the beginning of meiosis in male meiocytes. Required for the transition from leptotene to zygotene in meiocytes. Required for homologous chromosome pairing, and initiation and progression of meiotic recombination. Regulates meiocyte cytoskeleton organization. In Zea mays (Maize), this protein is Protein AMEIOTIC 1.